The chain runs to 500 residues: Proline/betaine transporter (500 aa).

The Cytoplasmic segment spans residues 1 to 37 (MLKRKKVKPITLRDVTIIDDGKLRKAITAASLGNAME). The chain crosses the membrane as a helical span at residues 38–58 (WFDFGVYGFVAYALGKVFFPG). Over 59–65 (ADPSVQM) the chain is Periplasmic. Residues 66–86 (VAALATFSVPFLIRPLGGLFF) form a helical membrane-spanning segment. At 87–97 (GMLGDKYGRQK) the chain is on the cytoplasmic side. A helical membrane pass occupies residues 98–118 (ILAITIVIMSISTFCIGLIPS). Topologically, residues 119–121 (YDT) are periplasmic. A helical membrane pass occupies residues 122–142 (IGIWAPILLLICKMAQGFSVG). At 143–169 (GEYTGASIFVAEYSPDRKRGFMGSWLD) the chain is on the cytoplasmic side. The helical transmembrane segment at 170–190 (FGSIAGFVLGAGVVVLISTIV) threads the bilayer. Residues 191–194 (GEAN) are Periplasmic-facing. The chain crosses the membrane as a helical span at residues 195 to 215 (FLDWGWRIPFFIALPLGIIGL). Topologically, residues 216–260 (YLRHALEETPAFQQHVDKLEQGDREGLQDGPKVSFKEIATKYWRS) are cytoplasmic. The helical transmembrane segment at 261-281 (LLTCIGLVIATNVTYYMLLTY) threads the bilayer. At 282–297 (MPSYLSHNLHYSEDHG) the chain is on the periplasmic side. A helical transmembrane segment spans residues 298–318 (VLIIIAIMIGMLFVQPVMGLL). Topologically, residues 319-325 (SDRFGRR) are cytoplasmic. Residues 326–346 (PFVLLGSVALFVLAIPAFILI) form a helical membrane-spanning segment. The Periplasmic portion of the chain corresponds to 347-350 (NSNV). Residues 351 to 371 (IGLIFAGLLMLAVILNCFTGV) traverse the membrane as a helical segment. Over 372-390 (MASTLPAMFPTHIRYSALA) the chain is Cytoplasmic. The helical transmembrane segment at 391–411 (AAFNISVLVAGLTPTLAAWLV) threads the bilayer. Over 412-416 (ESSQN) the chain is Periplasmic. The helical transmembrane segment at 417–437 (LMMPAYYLMVVAVVGLITGVT) threads the bilayer. Topologically, residues 438–500 (MKETANRPLK…LVQQHPRIDE (63 aa)) are cytoplasmic. A coiled-coil region spans residues 453-498 (ASDIQEAKEILVEHYDNIEQKIDDIDHEIADLQAKRTRLVQQHPRI).

This sequence belongs to the major facilitator superfamily. Metabolite:H+ Symporter (MHS) family (TC 2.A.1.6) family.

The protein localises to the cell inner membrane. Its function is as follows. Proton symporter that senses osmotic shifts and responds by importing osmolytes such as proline, glycine betaine, stachydrine, pipecolic acid, ectoine and taurine. It is both an osmosensor and an osmoregulator which is available to participate early in the bacterial osmoregulatory response. In Escherichia coli O157:H7, this protein is Proline/betaine transporter (proP).